Here is a 396-residue protein sequence, read N- to C-terminus: S-adenosylmethionine synthase (396 aa).

His14 is a binding site for ATP. Asp16 is a Mg(2+) binding site. Glu42 serves as a coordination point for K(+). Positions 55 and 98 each coordinate L-methionine. A flexible loop region spans residues 98–108 (QSPDIAMGVDK). ATP is bound by residues 174–176 (DGK), 240–241 (RF), Asp249, 255–256 (RK), Ala272, and Lys276. Asp249 serves as a coordination point for L-methionine. Lys280 contributes to the L-methionine binding site.

It belongs to the AdoMet synthase family. In terms of assembly, homotetramer; dimer of dimers. It depends on Mg(2+) as a cofactor. The cofactor is K(+).

Its subcellular location is the cytoplasm. It carries out the reaction L-methionine + ATP + H2O = S-adenosyl-L-methionine + phosphate + diphosphate. The protein operates within amino-acid biosynthesis; S-adenosyl-L-methionine biosynthesis; S-adenosyl-L-methionine from L-methionine: step 1/1. Its function is as follows. Catalyzes the formation of S-adenosylmethionine (AdoMet) from methionine and ATP. The overall synthetic reaction is composed of two sequential steps, AdoMet formation and the subsequent tripolyphosphate hydrolysis which occurs prior to release of AdoMet from the enzyme. The protein is S-adenosylmethionine synthase of Caldicellulosiruptor saccharolyticus (strain ATCC 43494 / DSM 8903 / Tp8T 6331).